Consider the following 324-residue polypeptide: Methionyl-tRNA formyltransferase (324 aa).

Residue 114 to 117 (SLLP) participates in (6S)-5,6,7,8-tetrahydrofolate binding.

This sequence belongs to the Fmt family.

It catalyses the reaction L-methionyl-tRNA(fMet) + (6R)-10-formyltetrahydrofolate = N-formyl-L-methionyl-tRNA(fMet) + (6S)-5,6,7,8-tetrahydrofolate + H(+). Its function is as follows. Attaches a formyl group to the free amino group of methionyl-tRNA(fMet). The formyl group appears to play a dual role in the initiator identity of N-formylmethionyl-tRNA by promoting its recognition by IF2 and preventing the misappropriation of this tRNA by the elongation apparatus. The polypeptide is Methionyl-tRNA formyltransferase (Phocaeicola vulgatus (strain ATCC 8482 / DSM 1447 / JCM 5826 / CCUG 4940 / NBRC 14291 / NCTC 11154) (Bacteroides vulgatus)).